Consider the following 57-residue polypeptide: Large ribosomal subunit protein bL32 (57 aa).

Belongs to the bacterial ribosomal protein bL32 family.

This is Large ribosomal subunit protein bL32 from Streptomyces griseus subsp. griseus (strain JCM 4626 / CBS 651.72 / NBRC 13350 / KCC S-0626 / ISP 5235).